The following is a 118-amino-acid chain: Large ribosomal subunit protein bL21c (118 aa).

The protein belongs to the bacterial ribosomal protein bL21 family. As to quaternary structure, part of the 50S ribosomal subunit.

Its subcellular location is the plastid. It is found in the chloroplast. Its function is as follows. This protein binds to 23S rRNA. This chain is Large ribosomal subunit protein bL21c, found in Psilotum nudum (Whisk fern).